Reading from the N-terminus, the 405-residue chain is MSFPSLQEQLDIITANTVEIISSAELEQKIQHSIKTGAPLKVKLGADPSRPDLHLGHSVVLRKLREFQDLGHEAILIIGDFTAMIGDPSGKSKTRPQLSAEEARENGASYFEQASKILDPHKTTICYNADWLGNMTFADVIRLSSHYTVARMLERDDFERRYRSSEPISIHEFLYPLAQAMDSVHLRNDVELGGTDQKFNLLVGRDLQREYGILPQVCITMPLLVGTGGEDKMSKSLGNAVCFNDLPSDMYGRVLSIPDTLIENWCRLLLPLTGEGRRAILEGWEEDPRTAKRRLAREIVMQYYSAGEAGAAEEHFDRLFVHKQAPTEIELTRFSEPELPLVDLLTTLGAAASKTDARRMIQQNAVSIDEEKITDVKTIITLSDEPKTLKAGKRKFFRIATAGNS.

The 'HIGH' region signature appears at 48–57; that stretch reads PSRPDLHLGH. A 'KMSKS' region motif is present at residues 232-236; it reads KMSKS. K235 serves as a coordination point for ATP. The 62-residue stretch at 339 to 400 folds into the S4 RNA-binding domain; the sequence is LPLVDLLTTL…AGKRKFFRIA (62 aa).

It belongs to the class-I aminoacyl-tRNA synthetase family. TyrS type 2 subfamily. In terms of assembly, homodimer.

It is found in the cytoplasm. The enzyme catalyses tRNA(Tyr) + L-tyrosine + ATP = L-tyrosyl-tRNA(Tyr) + AMP + diphosphate + H(+). Its function is as follows. Catalyzes the attachment of tyrosine to tRNA(Tyr) in a two-step reaction: tyrosine is first activated by ATP to form Tyr-AMP and then transferred to the acceptor end of tRNA(Tyr). The chain is Tyrosine--tRNA ligase from Chlorobium luteolum (strain DSM 273 / BCRC 81028 / 2530) (Pelodictyon luteolum).